Reading from the N-terminus, the 249-residue chain is Proteasome activator complex subunit 1 (249 aa).

Residues 60-102 (PLDIPVPDPVKEKEKEERKKQQEKEDKDEKKKGEDEDKGPPCG) are disordered. The span at 68-98 (PVKEKEKEERKKQQEKEDKDEKKKGEDEDKG) shows a compositional bias: basic and acidic residues.

Belongs to the PA28 family. Heterodimer of PSME1 and PSME2, which forms a hexameric ring. PSME1 can form homoheptamers.

Functionally, implicated in immunoproteasome assembly and required for efficient antigen processing. The PA28 activator complex enhances the generation of class I binding peptides by altering the cleavage pattern of the proteasome. This Sus scrofa (Pig) protein is Proteasome activator complex subunit 1 (PSME1).